A 512-amino-acid chain; its full sequence is ATP synthase subunit alpha 2 (512 aa).

ATP is bound at residue 169 to 176; sequence GDRQTGKT.

The protein belongs to the ATPase alpha/beta chains family. F-type ATPases have 2 components, CF(1) - the catalytic core - and CF(0) - the membrane proton channel. CF(1) has five subunits: alpha(3), beta(3), gamma(1), delta(1), epsilon(1). CF(0) has four main subunits: a(1), b(1), b'(1) and c(9-12).

The protein localises to the cell inner membrane. It carries out the reaction ATP + H2O + 4 H(+)(in) = ADP + phosphate + 5 H(+)(out). Its function is as follows. Produces ATP from ADP in the presence of a proton gradient across the membrane. The alpha chain is a regulatory subunit. The protein is ATP synthase subunit alpha 2 of Dinoroseobacter shibae (strain DSM 16493 / NCIMB 14021 / DFL 12).